Reading from the N-terminus, the 256-residue chain is MLEFYGQKFESRLLLGTAQYPSPAILADAVRASQSDIVTVSLRRESGEARAGQDFWALIRELGVAVLPNTAGCHTPREAVTTAKMAREIFGTNWIKLEVIGDTDTLQPDPFGLVEAARALCDDGFEVFPYMNDDLVVAERLIEAGCKVLMPWGAPIGSGRGLNNPYALKTMRAHFPDIPLVVDAGIGVPSHAAAAMELGYDAVLINTAVAKAGDPVAMARGFALAVEAGRLAFEADAIEARDMAAPSTPLLGKAFL.

The active-site Schiff-base intermediate with DXP is the K96. Residues G157, 184–185 (AG), and 206–207 (NT) contribute to the 1-deoxy-D-xylulose 5-phosphate site.

Belongs to the ThiG family. Homotetramer. Forms heterodimers with either ThiH or ThiS.

The protein resides in the cytoplasm. The catalysed reaction is [ThiS sulfur-carrier protein]-C-terminal-Gly-aminoethanethioate + 2-iminoacetate + 1-deoxy-D-xylulose 5-phosphate = [ThiS sulfur-carrier protein]-C-terminal Gly-Gly + 2-[(2R,5Z)-2-carboxy-4-methylthiazol-5(2H)-ylidene]ethyl phosphate + 2 H2O + H(+). It functions in the pathway cofactor biosynthesis; thiamine diphosphate biosynthesis. Its function is as follows. Catalyzes the rearrangement of 1-deoxy-D-xylulose 5-phosphate (DXP) to produce the thiazole phosphate moiety of thiamine. Sulfur is provided by the thiocarboxylate moiety of the carrier protein ThiS. In vitro, sulfur can be provided by H(2)S. This Brucella anthropi (strain ATCC 49188 / DSM 6882 / CCUG 24695 / JCM 21032 / LMG 3331 / NBRC 15819 / NCTC 12168 / Alc 37) (Ochrobactrum anthropi) protein is Thiazole synthase.